We begin with the raw amino-acid sequence, 171 residues long: 3-hydroxydecanoyl-[acyl-carrier-protein] dehydratase (171 aa).

Histidine 70 is a catalytic residue.

This sequence belongs to the thioester dehydratase family. FabA subfamily. In terms of assembly, homodimer.

It localises to the cytoplasm. It carries out the reaction a (3R)-hydroxyacyl-[ACP] = a (2E)-enoyl-[ACP] + H2O. The enzyme catalyses (3R)-hydroxydecanoyl-[ACP] = (2E)-decenoyl-[ACP] + H2O. It catalyses the reaction (2E)-decenoyl-[ACP] = (3Z)-decenoyl-[ACP]. It functions in the pathway lipid metabolism; fatty acid biosynthesis. Necessary for the introduction of cis unsaturation into fatty acids. Catalyzes the dehydration of (3R)-3-hydroxydecanoyl-ACP to E-(2)-decenoyl-ACP and then its isomerization to Z-(3)-decenoyl-ACP. Can catalyze the dehydratase reaction for beta-hydroxyacyl-ACPs with saturated chain lengths up to 16:0, being most active on intermediate chain length. This chain is 3-hydroxydecanoyl-[acyl-carrier-protein] dehydratase, found in Shewanella loihica (strain ATCC BAA-1088 / PV-4).